Reading from the N-terminus, the 180-residue chain is ATP synthase subunit delta (180 aa).

The protein belongs to the ATPase delta chain family. In terms of assembly, F-type ATPases have 2 components, F(1) - the catalytic core - and F(0) - the membrane proton channel. F(1) has five subunits: alpha(3), beta(3), gamma(1), delta(1), epsilon(1). F(0) has three main subunits: a(1), b(2) and c(10-14). The alpha and beta chains form an alternating ring which encloses part of the gamma chain. F(1) is attached to F(0) by a central stalk formed by the gamma and epsilon chains, while a peripheral stalk is formed by the delta and b chains.

Its subcellular location is the cell inner membrane. Functionally, f(1)F(0) ATP synthase produces ATP from ADP in the presence of a proton or sodium gradient. F-type ATPases consist of two structural domains, F(1) containing the extramembraneous catalytic core and F(0) containing the membrane proton channel, linked together by a central stalk and a peripheral stalk. During catalysis, ATP synthesis in the catalytic domain of F(1) is coupled via a rotary mechanism of the central stalk subunits to proton translocation. Its function is as follows. This protein is part of the stalk that links CF(0) to CF(1). It either transmits conformational changes from CF(0) to CF(1) or is implicated in proton conduction. This chain is ATP synthase subunit delta, found in Geotalea uraniireducens (strain Rf4) (Geobacter uraniireducens).